The sequence spans 57 residues: MLFKSLQSITSVNSIQKNQISSISVGSTQSNNNAALLDAAALVVIPGLLTAAAVAHI.

Residues 34 to 54 (AALLDAAALVVIPGLLTAAAV) traverse the membrane as a helical segment.

Its subcellular location is the membrane. This is an uncharacterized protein from Dictyostelium discoideum (Social amoeba).